The sequence spans 260 residues: Snake venom serine protease serpentokallikrein-1 (260 aa).

A signal peptide spans 1–18 (MVLIRVLANLLILQLSYA). The propeptide occupies 19–24 (QRTSEL). In terms of domain architecture, Peptidase S1 spans 25–251 (VIGGDECNIN…HLDWIKSIIA (227 aa)). 6 disulfides stabilise this stretch: Cys31-Cys165, Cys52-Cys68, Cys102-Cys258, Cys144-Cys212, Cys176-Cys191, and Cys202-Cys227. The Charge relay system role is filled by His67. 2 N-linked (GlcNAc...) asparagine glycosylation sites follow: Asn81 and Asn105. The active-site Charge relay system is the Asp112. Asn156 and Asn172 each carry an N-linked (GlcNAc...) asparagine glycan. Residue Ser206 is the Charge relay system of the active site.

Belongs to the peptidase S1 family. Snake venom subfamily. In terms of assembly, monomer. Expressed by the venom gland.

The protein localises to the secreted. Functionally, snake venom serine protease that may act in the hemostasis system of the prey. The chain is Snake venom serine protease serpentokallikrein-1 from Protobothrops mucrosquamatus (Taiwan habu).